We begin with the raw amino-acid sequence, 644 residues long: 1-deoxy-D-xylulose-5-phosphate synthase (644 aa).

Residues histidine 78 and glycine 120–alanine 122 contribute to the thiamine diphosphate site. Aspartate 149 serves as a coordination point for Mg(2+). Residues alanine 150–alanine 151, asparagine 178, and glutamate 373 each bind thiamine diphosphate. Asparagine 178 lines the Mg(2+) pocket.

The protein belongs to the transketolase family. DXPS subfamily. Homodimer. Requires Mg(2+) as cofactor. It depends on thiamine diphosphate as a cofactor.

It carries out the reaction D-glyceraldehyde 3-phosphate + pyruvate + H(+) = 1-deoxy-D-xylulose 5-phosphate + CO2. It functions in the pathway metabolic intermediate biosynthesis; 1-deoxy-D-xylulose 5-phosphate biosynthesis; 1-deoxy-D-xylulose 5-phosphate from D-glyceraldehyde 3-phosphate and pyruvate: step 1/1. Catalyzes the acyloin condensation reaction between C atoms 2 and 3 of pyruvate and glyceraldehyde 3-phosphate to yield 1-deoxy-D-xylulose-5-phosphate (DXP). This Chlamydia felis (strain Fe/C-56) (Chlamydophila felis) protein is 1-deoxy-D-xylulose-5-phosphate synthase.